Reading from the N-terminus, the 83-residue chain is UPF0297 protein CKR_1221 (83 aa).

This sequence belongs to the UPF0297 family.

The chain is UPF0297 protein CKR_1221 from Clostridium kluyveri (strain NBRC 12016).